We begin with the raw amino-acid sequence, 778 residues long: Pentatricopeptide repeat-containing protein At3g09650, chloroplastic (778 aa).

Residues 1–65 (MNILRPPTSS…RSASGTANSS (65 aa)) constitute a chloroplast transit peptide. 3 PPR repeats span residues 235–269 (DTAAFNAVLNACANLGDTDKYWKLFEEMSEWDCEP), 270–304 (DVLTYNVMIKLCARVGRKELIVFVLERIIDKGIKV), and 305–339 (CMTTMHSLVAAYVGFGDLRTAERIVQAMREKRRDL). Residues 351–381 (LKEKEEEEAEDDEDAFEDDEDSGYSARDEVS) form a disordered region. Acidic residues predominate over residues 355–372 (EEEEAEDDEDAFEDDEDS). PPR repeat units follow at residues 413-443 (DSRIYTTLMKGYMKNGRVADTARMLEAMRRQ), 451-485 (DEVTYTTVVSAFVNAGLMDRARQVLAEMARMGVPA), 486-521 (NRITYNVLLKGYCKQLQIDRAEDLLREMTEDAGIEP), 522-556 (DVVSYNIIIDGCILIDDSAGALAFFNEMRTRGIAP), 557-587 (TKISYTTLMKAFAMSGQPKLANRVFDEMMND), 593-627 (DLIAWNMLVEGYCRLGLIEDAQRVVSRMKENGFYP), and 628-658 (NVATYGSLANGVSQARKPGDALLLWKEIKER).

The protein belongs to the PPR family. P subfamily.

It is found in the plastid. The protein localises to the chloroplast stroma. In terms of biological role, involved in the processing of polycistronic chloroplast psbB-psbT-psbH-petB-petD transcript. Could bind RNA. The chain is Pentatricopeptide repeat-containing protein At3g09650, chloroplastic (HCF152) from Arabidopsis thaliana (Mouse-ear cress).